A 280-amino-acid chain; its full sequence is MRKLGLIAGGGALPVELASHCEAAGRAFAVMRLRSFADPSLDRYPGADVGIGEFGKIFKALRAEGCDVVCFAGNVSRPDFSALMPDARGLKVLPSLIVAARKGDDALLRRVLDEFEKEGFEIEGAHEVMGEMTLPRGRLGKVSPAPEHMADIDKALDVAREIGRLDIGQGAVVCEGLVLAVEAQEGTDAMLRRVADLPEAIRGRAERRLGVLAKAPKPIQETRVDLPTIGVATIHRAARAGLAGIVGEAGRLLVVDREAVIAAADDLGLFVLGVDPQERP.

Residues Ala12, Asn74–Val75, Gln169, Thr187–Asp188, Lys214, and Leu226–Thr233 each bind substrate.

The protein belongs to the LpxI family. Homodimer. Mg(2+) serves as cofactor.

The protein localises to the cell inner membrane. It carries out the reaction UDP-2-N,3-O-bis[(3R)-3-hydroxytetradecanoyl]-alpha-D-glucosamine + H2O = 2-N,3-O-bis[(3R)-3-hydroxytetradecanoyl]-alpha-D-glucosaminyl 1-phosphate + UMP + 2 H(+). It functions in the pathway glycolipid biosynthesis; lipid IV(A) biosynthesis; lipid IV(A) from (3R)-3-hydroxytetradecanoyl-[acyl-carrier-protein] and UDP-N-acetyl-alpha-D-glucosamine: step 4/6. Its activity is regulated as follows. Inhibited by high concentrations of Cu(2+) and Zn(2+). Completely inhibited by EDTA in vitro. Hydrolyzes the pyrophosphate bond of UDP-2,3-diacylglucosamine to form 2,3-diacylglucosamine 1-phosphate (lipid X) and UMP by catalyzing the attack of water at the beta-P atom. Involved in the biosynthesis of lipid A, a phosphorylated glycolipid that anchors the lipopolysaccharide to the outer membrane of the cell. Can functionally complement lpxH deficiency in E.coli. Cannot use CDP-diacylglycerol as substrate. This is UDP-2,3-diacylglucosamine pyrophosphatase LpxI from Caulobacter vibrioides (strain ATCC 19089 / CIP 103742 / CB 15) (Caulobacter crescentus).